The following is a 544-amino-acid chain: Ell-associated factor Eaf (544 aa).

A disordered region spans residues 147 to 544 (QSVPMNMGHQ…LSSNSSDDDD (398 aa)). Over residues 193-202 (SSKDKVDFKP) the composition is skewed to basic and acidic residues. Position 205 is a phosphoserine (Ser-205). Residues 264 to 273 (SGSSTGSSSG) show a composition bias toward low complexity. Positions 287 to 299 (GKQRQAHGKRQQI) are enriched in basic residues. Composition is skewed to low complexity over residues 305–319 (PPVQQQPHYQQQQQP), 333–374 (QPHP…QQRP), and 396–407 (ASQSVAQAAAVL). The segment covering 425–440 (DSSDSDSGSDSDDSTE) has biased composition (acidic residues). Low complexity-rich tracts occupy residues 450–483 (EQQQQQQLQHQQIQQPAPHHQRHQQQQSQQHMNQ), 503–513 (QQPQPQPQQQQ), and 526–544 (NDLLQNDLQLSSNSSDDDD).

It belongs to the EAF family.

It localises to the nucleus. Promotes transcriptional elongation by Su(Tpl)/ELL. Essential for development. The protein is Ell-associated factor Eaf of Drosophila persimilis (Fruit fly).